The sequence spans 208 residues: N-(5'-phosphoribosyl)anthranilate isomerase (208 aa).

Belongs to the TrpF family.

It catalyses the reaction N-(5-phospho-beta-D-ribosyl)anthranilate = 1-(2-carboxyphenylamino)-1-deoxy-D-ribulose 5-phosphate. It participates in amino-acid biosynthesis; L-tryptophan biosynthesis; L-tryptophan from chorismate: step 3/5. The sequence is that of N-(5'-phosphoribosyl)anthranilate isomerase from Methanothrix thermoacetophila (strain DSM 6194 / JCM 14653 / NBRC 101360 / PT) (Methanosaeta thermophila).